Reading from the N-terminus, the 372-residue chain is Putative isochorismate synthase MenF (372 aa).

Lys-119 serves as the catalytic Proton acceptor. Glu-175 serves as the catalytic Proton donor. Residues Glu-219 and Glu-356 each contribute to the Mg(2+) site.

Belongs to the isochorismate synthase family. Mg(2+) serves as cofactor.

It catalyses the reaction chorismate = isochorismate. Its pathway is quinol/quinone metabolism; 1,4-dihydroxy-2-naphthoate biosynthesis; 1,4-dihydroxy-2-naphthoate from chorismate: step 1/7. It functions in the pathway quinol/quinone metabolism; menaquinone biosynthesis. In terms of biological role, catalyzes the conversion of chorismate to isochorismate. This is Putative isochorismate synthase MenF (menF) from Mycobacterium tuberculosis (strain CDC 1551 / Oshkosh).